A 297-amino-acid chain; its full sequence is 4-hydroxy-tetrahydrodipicolinate synthase (297 aa).

Residue T46 participates in pyruvate binding. Residue Y134 is the Proton donor/acceptor of the active site. Residue K162 is the Schiff-base intermediate with substrate of the active site. I204 lines the pyruvate pocket.

The protein belongs to the DapA family. Homotetramer; dimer of dimers.

The protein localises to the cytoplasm. It carries out the reaction L-aspartate 4-semialdehyde + pyruvate = (2S,4S)-4-hydroxy-2,3,4,5-tetrahydrodipicolinate + H2O + H(+). It participates in amino-acid biosynthesis; L-lysine biosynthesis via DAP pathway; (S)-tetrahydrodipicolinate from L-aspartate: step 3/4. Its function is as follows. Catalyzes the condensation of (S)-aspartate-beta-semialdehyde [(S)-ASA] and pyruvate to 4-hydroxy-tetrahydrodipicolinate (HTPA). The protein is 4-hydroxy-tetrahydrodipicolinate synthase of Stenotrophomonas maltophilia (strain K279a).